Consider the following 158-residue polypeptide: MRKAKPKKRQILSDAVFGSQRVTKFVNHLMYDGKKSMAFNIFYSALEKVRAKLSDEQKSSLEIWEHALNNITPLVEVKSRRVGGATFQVPTEIYPERKETISMKNMIFFARKRDGKSMADKLSAEIVDAFNSQGGAYKKKEDMRKMAEANRAFAYFRF.

It belongs to the universal ribosomal protein uS7 family. Part of the 30S ribosomal subunit. Contacts proteins S9 and S11.

Functionally, one of the primary rRNA binding proteins, it binds directly to 16S rRNA where it nucleates assembly of the head domain of the 30S subunit. Is located at the subunit interface close to the decoding center, probably blocks exit of the E-site tRNA. The protein is Small ribosomal subunit protein uS7 of Azobacteroides pseudotrichonymphae genomovar. CFP2.